A 212-amino-acid polypeptide reads, in one-letter code: Ribosomal RNA small subunit methyltransferase G (212 aa).

Residues glycine 80, leucine 85, 131 to 132, and arginine 146 each bind S-adenosyl-L-methionine; that span reads AE.

Belongs to the methyltransferase superfamily. RNA methyltransferase RsmG family.

It localises to the cytoplasm. It carries out the reaction guanosine(527) in 16S rRNA + S-adenosyl-L-methionine = N(7)-methylguanosine(527) in 16S rRNA + S-adenosyl-L-homocysteine. Specifically methylates the N7 position of guanine in position 527 of 16S rRNA. The chain is Ribosomal RNA small subunit methyltransferase G from Stenotrophomonas maltophilia (strain K279a).